Reading from the N-terminus, the 246-residue chain is 1-(5-phosphoribosyl)-5-[(5-phosphoribosylamino)methylideneamino] imidazole-4-carboxamide isomerase (246 aa).

The Proton acceptor role is filled by aspartate 12. The Proton donor role is filled by aspartate 134.

This sequence belongs to the HisA/HisF family.

Its subcellular location is the cytoplasm. It catalyses the reaction 1-(5-phospho-beta-D-ribosyl)-5-[(5-phospho-beta-D-ribosylamino)methylideneamino]imidazole-4-carboxamide = 5-[(5-phospho-1-deoxy-D-ribulos-1-ylimino)methylamino]-1-(5-phospho-beta-D-ribosyl)imidazole-4-carboxamide. The protein operates within amino-acid biosynthesis; L-histidine biosynthesis; L-histidine from 5-phospho-alpha-D-ribose 1-diphosphate: step 4/9. The polypeptide is 1-(5-phosphoribosyl)-5-[(5-phosphoribosylamino)methylideneamino] imidazole-4-carboxamide isomerase (Psychrobacter cryohalolentis (strain ATCC BAA-1226 / DSM 17306 / VKM B-2378 / K5)).